A 125-amino-acid polypeptide reads, in one-letter code: MVSPLPLNKRQQGQVYEVMAEQYLQRHHLKPVERNFTCRSGEIDLIMRDKSCVVFVEVKFRKQNHFGSAAEAVNWRKQQKLKRAALLWLKKNSLSTEHTEFRFDVVAIQGPDQQIEWFTNTLVEG.

The protein belongs to the UPF0102 family.

The sequence is that of UPF0102 protein PBPRA3228 from Photobacterium profundum (strain SS9).